The chain runs to 122 residues: Small ribosomal subunit protein uS12c (122 aa).

This sequence belongs to the universal ribosomal protein uS12 family. In terms of assembly, part of the 30S ribosomal subunit.

It is found in the plastid. The protein resides in the chloroplast. Functionally, with S4 and S5 plays an important role in translational accuracy. Located at the interface of the 30S and 50S subunits. This Chloranthus spicatus (Chulantree) protein is Small ribosomal subunit protein uS12c (rps12).